Here is a 363-residue protein sequence, read N- to C-terminus: NAD(P)H-quinone oxidoreductase subunit 1, chloroplastic (363 aa).

The next 6 membrane-spanning stretches (helical) occupy residues 27 to 47 (IWLL…VLVI), 98 to 118 (FSIG…VIPF), 127 to 147 (LSIG…GLLM), 248 to 268 (YSGI…LVSS), 300 to 320 (VFGT…FLFI), and 336 to 356 (LLNL…LLTT).

Belongs to the complex I subunit 1 family. In terms of assembly, NDH is composed of at least 16 different subunits, 5 of which are encoded in the nucleus.

The protein localises to the plastid. It is found in the chloroplast thylakoid membrane. The catalysed reaction is a plastoquinone + NADH + (n+1) H(+)(in) = a plastoquinol + NAD(+) + n H(+)(out). The enzyme catalyses a plastoquinone + NADPH + (n+1) H(+)(in) = a plastoquinol + NADP(+) + n H(+)(out). In terms of biological role, NDH shuttles electrons from NAD(P)H:plastoquinone, via FMN and iron-sulfur (Fe-S) centers, to quinones in the photosynthetic chain and possibly in a chloroplast respiratory chain. The immediate electron acceptor for the enzyme in this species is believed to be plastoquinone. Couples the redox reaction to proton translocation, and thus conserves the redox energy in a proton gradient. The chain is NAD(P)H-quinone oxidoreductase subunit 1, chloroplastic from Platanus occidentalis (Sycamore).